Consider the following 93-residue polypeptide: Protein VNG_0358C (93 aa).

The sequence is that of Protein VNG_0358C from Halobacterium salinarum (strain ATCC 700922 / JCM 11081 / NRC-1) (Halobacterium halobium).